Consider the following 607-residue polypeptide: MVNKSNSLDELLKQIKITEIIQHYGVKIQTKGNSLLALCPFHDDKNPSMSISSSKNIFKCWACNAAGNGIAFIQKHDQLDWKTALKKAIEICGIKLENWNSNLLTKVDPKQKRYWEINNALITYYQTRLKRETNPNGMNYLVEKRKLNKTLIEQFQLGLAFHNEDKYLCESMERYPFINPKIKPSELYLFSKTNQQGLGFFDFNTKKATFQNQIMIPIHDFNGNPVGFSARSVDNINKLKYKNSADHEFFKKGELLFNFHRLNKNLNQLFIVEGYFDVFTLTNSKFEAVALMGLALNDVQIKAIKAHFKELQTLVLALDNDASGQNAVFSLIEKLNNNNFIVEIVQWEHNYKDWDELYLNKGSEQVILQANKRQNLIEYLVSFFKKQQLDQRVITNKIIAFLTKNQTILNDHSFLIFLIKNLVKLLEYSDEKTLYETVLKHKEKLVSKFDNNRFYINTSGHAQPPQELQKTTAALVQTAFEEAVNELWKPEIFAFALIDKRFLVELKQSHLDEVFKECNFNLFDVELFIEKARIYWSENQTANWVGFESVLDQNYLLNNKARLLEIKDIFLDELTCYQANDFQNYLKTFQTLLKQQKQRLKNLKLTL.

A CHC2-type zinc finger spans residues 39-63 (CPFHDDKNPSMSISSSKNIFKCWAC). Residues 267–350 (NQLFIVEGYF…IVEIVQWEHN (84 aa)) enclose the Toprim domain. Mg(2+) is bound by residues Glu273, Asp319, and Asp321.

Belongs to the DnaG primase family. As to quaternary structure, monomer. Interacts with DnaB. Zn(2+) is required as a cofactor. Requires Mg(2+) as cofactor.

The catalysed reaction is ssDNA + n NTP = ssDNA/pppN(pN)n-1 hybrid + (n-1) diphosphate.. RNA polymerase that catalyzes the synthesis of short RNA molecules used as primers for DNA polymerase during DNA replication. This chain is DNA primase, found in Mycoplasma genitalium (strain ATCC 33530 / DSM 19775 / NCTC 10195 / G37) (Mycoplasmoides genitalium).